We begin with the raw amino-acid sequence, 1326 residues long: Coiled-coil domain-containing protein 171 (1326 aa).

Coiled coils occupy residues 53 to 294 (TTKH…RAAH), 323 to 391 (AEAV…RLQY), 450 to 561 (SFSV…AFHK), 597 to 630 (SELC…ICKN), 660 to 707 (WHRQ…EQLV), 765 to 792 (FKLE…MKKK), 979 to 1143 (FTQR…KECV), and 1217 to 1241 (IMTL…LHTA). The disordered stretch occupies residues 1306-1326 (SSHSSPVTMSANANRPTQIGL).

The polypeptide is Coiled-coil domain-containing protein 171 (CCDC171) (Homo sapiens (Human)).